Here is a 210-residue protein sequence, read N- to C-terminus: Somatotropin-2 (210 aa).

The N-terminal stretch at 1–22 is a signal peptide; that stretch reads MGQVFLLMPVLLVSCFLGQGAA. A Zn(2+)-binding site is contributed by H38. Cysteines 71 and 183 form a disulfide. A Zn(2+)-binding site is contributed by E192. Residues C200 and C208 are joined by a disulfide bond.

Belongs to the somatotropin/prolactin family.

The protein resides in the secreted. Its function is as follows. Growth hormone plays an important role in growth control and is involved in the regulation of several anabolic processes. Implicated as an osmoregulatory substance important for seawater adaptation. This is Somatotropin-2 (gh2) from Oncorhynchus mykiss (Rainbow trout).